The chain runs to 264 residues: Thiazole synthase (264 aa).

Catalysis depends on lysine 106, which acts as the Schiff-base intermediate with DXP. 1-deoxy-D-xylulose 5-phosphate contacts are provided by residues glycine 167, 193-194 (AG), and 215-216 (NS).

It belongs to the ThiG family. In terms of assembly, homotetramer. Forms heterodimers with either ThiH or ThiS.

It localises to the cytoplasm. The catalysed reaction is [ThiS sulfur-carrier protein]-C-terminal-Gly-aminoethanethioate + 2-iminoacetate + 1-deoxy-D-xylulose 5-phosphate = [ThiS sulfur-carrier protein]-C-terminal Gly-Gly + 2-[(2R,5Z)-2-carboxy-4-methylthiazol-5(2H)-ylidene]ethyl phosphate + 2 H2O + H(+). Its pathway is cofactor biosynthesis; thiamine diphosphate biosynthesis. Its function is as follows. Catalyzes the rearrangement of 1-deoxy-D-xylulose 5-phosphate (DXP) to produce the thiazole phosphate moiety of thiamine. Sulfur is provided by the thiocarboxylate moiety of the carrier protein ThiS. In vitro, sulfur can be provided by H(2)S. The sequence is that of Thiazole synthase from Ectopseudomonas mendocina (strain ymp) (Pseudomonas mendocina).